Reading from the N-terminus, the 218-residue chain is Acetoacetyl-CoA:acetate/butyrate CoA transferase alpha subunit (218 aa).

24-30 lines the CoA pocket; it reads GGFLNCG.

This sequence belongs to the 3-oxoacid CoA-transferase subunit A family. In terms of assembly, heterotetramer composed of two alpha subunits (CtfA) and two beta subunits (CtfB).

The catalysed reaction is acetoacetate + butanoyl-CoA = acetoacetyl-CoA + butanoate. It catalyses the reaction acetoacetate + acetyl-CoA = acetoacetyl-CoA + acetate. The acetate and butyrate conversion reactions are inhibited in vitro by physiological levels of acetone and butanol. In terms of biological role, catalyzes the transfer of CoA from acetoacetyl-CoA to acetate, butyrate and propionate. Also shows low activity with valerate, isobutyrate and crotonate. Plays an important role in the metabolic shift between the acid-producing and solvent-forming states of C.acetobutylicum. Acts mainly to detoxify the medium by removing the acetate and butyrate excreted earlier in the fermentation. The polypeptide is Acetoacetyl-CoA:acetate/butyrate CoA transferase alpha subunit (Clostridium acetobutylicum (strain ATCC 824 / DSM 792 / JCM 1419 / IAM 19013 / LMG 5710 / NBRC 13948 / NRRL B-527 / VKM B-1787 / 2291 / W)).